The primary structure comprises 377 residues: UDP-N-acetylenolpyruvoylglucosamine reductase (377 aa).

The 168-residue stretch at 48-215 folds into the FAD-binding PCMH-type domain; that stretch reads LGGTPMAAVR…LGITLQLHTD (168 aa). R193 is a catalytic residue. S268 acts as the Proton donor in catalysis. The active site involves E369.

The protein belongs to the MurB family. Requires FAD as cofactor.

Its subcellular location is the cytoplasm. It carries out the reaction UDP-N-acetyl-alpha-D-muramate + NADP(+) = UDP-N-acetyl-3-O-(1-carboxyvinyl)-alpha-D-glucosamine + NADPH + H(+). It functions in the pathway cell wall biogenesis; peptidoglycan biosynthesis. Functionally, cell wall formation. This is UDP-N-acetylenolpyruvoylglucosamine reductase from Corynebacterium diphtheriae (strain ATCC 700971 / NCTC 13129 / Biotype gravis).